The sequence spans 222 residues: UPF0585 protein CG18661 (222 aa).

The protein belongs to the UPF0585 family.

In Drosophila melanogaster (Fruit fly), this protein is UPF0585 protein CG18661.